The sequence spans 472 residues: Uronate isomerase (472 aa).

This sequence belongs to the metallo-dependent hydrolases superfamily. Uronate isomerase family.

It carries out the reaction D-glucuronate = D-fructuronate. The catalysed reaction is aldehydo-D-galacturonate = keto-D-tagaturonate. The protein operates within carbohydrate metabolism; pentose and glucuronate interconversion. The protein is Uronate isomerase of Xanthomonas euvesicatoria pv. vesicatoria (strain 85-10) (Xanthomonas campestris pv. vesicatoria).